A 528-amino-acid polypeptide reads, in one-letter code: Protein phosphatase 1 regulatory subunit 16A (528 aa).

A coiled-coil region spans residues 18–45; the sequence is STQERLKHAQKRRAQQVKMWAQAEKEAQ. The disordered stretch occupies residues 19–59; sequence TQERLKHAQKRRAQQVKMWAQAEKEAQGKKGPGERPRKEAA. Basic and acidic residues predominate over residues 40-58; that stretch reads AEKEAQGKKGPGERPRKEA. ANK repeat units lie at residues 70–99, 103–132, 136–165, 231–260, and 264–293; these read PPSV…SPDL, DGLT…NINA, ECWT…NLLA, HGAT…SLSA, and DGWE…DLNA. Disordered stretches follow at residues 330-351 and 367-421; these read RQRS…VVRR and QEAI…SPVR. At Ser-433 the chain carries Phosphoserine. A disordered region spans residues 462–505; the sequence is QRAAAKLQRPPPEGPESPETAEPGLPGDTVTPQPDCGFRAGGDP. Cys-524 carries S-palmitoyl cysteine lipidation. Position 525 is a cysteine methyl ester (Cys-525). A lipid anchor (S-farnesyl cysteine) is attached at Cys-525. A propeptide spans 526–528 (removed in mature form); sequence LLM.

Binds PP1.

Its subcellular location is the cell membrane. Functionally, inhibits protein phosphatase 1 activity toward phosphorylase, myosin light chain and myosin substrates. The sequence is that of Protein phosphatase 1 regulatory subunit 16A (PPP1R16A) from Homo sapiens (Human).